Consider the following 63-residue polypeptide: Overexpressed in colon carcinoma 1 protein homolog (63 aa).

The segment covering 1–10 has biased composition (polar residues); sequence MGCGNSTATS. Positions 1–39 are disordered; it reads MGCGNSTATSAAAGRGPTGAVKDTTEDSITEDDKRRNYG.

The protein belongs to the OCC1 family.

The sequence is that of Overexpressed in colon carcinoma 1 protein homolog from Mus musculus (Mouse).